The following is a 117-amino-acid chain: Large ribosomal subunit protein eL34 (117 aa).

Ser-12 is subject to Phosphoserine. N6-acetyllysine occurs at positions 36 and 43. Residue Lys-108 forms a Glycyl lysine isopeptide (Lys-Gly) (interchain with G-Cter in SUMO2) linkage.

This sequence belongs to the eukaryotic ribosomal protein eL34 family. As to quaternary structure, component of the large ribosomal subunit.

Its subcellular location is the cytoplasm. It is found in the cytosol. The protein resides in the endoplasmic reticulum. Functionally, component of the large ribosomal subunit. The ribosome is a large ribonucleoprotein complex responsible for the synthesis of proteins in the cell. This is Large ribosomal subunit protein eL34 (Rpl34) from Mus musculus (Mouse).